We begin with the raw amino-acid sequence, 467 residues long: UDP-glycosyltransferase 71D1 (467 aa).

Histidine 16 acts as the Proton acceptor in catalysis. Histidine 16 is an an anthocyanidin binding site. The active-site Charge relay is the aspartate 122. UDP-alpha-D-glucose contacts are provided by threonine 144, glutamine 341, histidine 356, tryptophan 359, asparagine 360, serine 361, and glutamate 364. Alanine 379 serves as a coordination point for an anthocyanidin. UDP-alpha-D-glucose-binding residues include glutamate 380 and glutamine 381.

This sequence belongs to the UDP-glycosyltransferase family.

It carries out the reaction a flavonol + UDP-alpha-D-glucose = a flavonol 3-O-beta-D-glucoside + UDP + H(+). Possesses quercetin 3-O-glucosyltransferase activity in vitro. This chain is UDP-glycosyltransferase 71D1 (UGT71D1), found in Arabidopsis thaliana (Mouse-ear cress).